Here is a 295-residue protein sequence, read N- to C-terminus: Bifunctional protein FolD (295 aa).

NADP(+) is bound by residues 165 to 167 (GRS), serine 190, and isoleucine 231.

The protein belongs to the tetrahydrofolate dehydrogenase/cyclohydrolase family. In terms of assembly, homodimer.

The enzyme catalyses (6R)-5,10-methylene-5,6,7,8-tetrahydrofolate + NADP(+) = (6R)-5,10-methenyltetrahydrofolate + NADPH. The catalysed reaction is (6R)-5,10-methenyltetrahydrofolate + H2O = (6R)-10-formyltetrahydrofolate + H(+). It functions in the pathway one-carbon metabolism; tetrahydrofolate interconversion. In terms of biological role, catalyzes the oxidation of 5,10-methylenetetrahydrofolate to 5,10-methenyltetrahydrofolate and then the hydrolysis of 5,10-methenyltetrahydrofolate to 10-formyltetrahydrofolate. This chain is Bifunctional protein FolD, found in Nitrosomonas europaea (strain ATCC 19718 / CIP 103999 / KCTC 2705 / NBRC 14298).